The sequence spans 368 residues: Peptide chain release factor 2 (368 aa).

Gln249 is modified (N5-methylglutamine).

It belongs to the prokaryotic/mitochondrial release factor family. Methylated by PrmC. Methylation increases the termination efficiency of RF2.

It localises to the cytoplasm. Peptide chain release factor 2 directs the termination of translation in response to the peptide chain termination codons UGA and UAA. The protein is Peptide chain release factor 2 of Rhodococcus jostii (strain RHA1).